The sequence spans 907 residues: Epidermal growth factor receptor substrate 15-like 1 (907 aa).

A2 carries the post-translational modification N-acetylalanine. The EH 1 domain maps to G15–H104. The tract at residues G15 to D368 is interaction with DAB2. Residues L48–A83 enclose the EF-hand 1 domain. Phosphotyrosine is present on Y74. Residues S107 and S108 each carry the phosphoserine modification. An EH 2 domain is found at E127–K215. The region spanning L159–A194 is the EF-hand 2 domain. D172, D174, D176, H178, and E183 together coordinate Ca(2+). Phosphoserine is present on residues S229, S244, S253, S255, and S259. A disordered region spans residues S229 to V260. The segment covering S241–S255 has biased composition (low complexity). EF-hand domains follow at residues A272 to T307 and Q308 to K341. Positions D273–G363 constitute an EH 3 domain. Position 360 is a phosphoserine (S360). T364 carries the post-translational modification Phosphothreonine. Residues S369 and S375 each carry the phosphoserine modification. The stretch at L384–S551 forms a coiled coil. S558 bears the Phosphoserine mark. Phosphotyrosine is present on Y562. S610 is modified (phosphoserine). Residues Q611 to S860 are disordered. Positions D622 to K636 are enriched in basic and acidic residues. Over residues D643–A652 the composition is skewed to polar residues. Residues S664, S670, S695, S715, and S732 each carry the phosphoserine modification. The segment covering N682 to L696 has biased composition (polar residues). The span at F703 to S743 shows a compositional bias: low complexity. Over residues A776–P790 the composition is skewed to pro residues. S791 is subject to Phosphoserine. Over residues S791–S802 the composition is skewed to polar residues. The residue at position 795 (T795) is a Phosphothreonine. Residues A840–S853 are compositionally biased toward low complexity. 2 UIM domains span residues N863 to R882 and Q889 to A907.

As to quaternary structure, interacts with EPS15, AGFG1/HRB and AGFG2/HRBL. Associates with the clathrin-associated adapter protein complex 2 (AP-2). Interacts with FCHO1. Interacts with FCHO2. Interacts (via EH domains) with DAB2. Interacts with UBQLN1 (via ubiquitin-like domain). Interacts with CAVIN3 (via leucine-zipper domain). Interacts with REPS2. In terms of processing, phosphorylated on tyrosine residues by EGFR.

It is found in the cell membrane. Its subcellular location is the nucleus. The protein resides in the membrane. It localises to the coated pit. Seems to be a constitutive component of clathrin-coated pits that is required for receptor-mediated endocytosis. Involved in endocytosis of integrin beta-1 (ITGB1) and transferrin receptor (TFR); internalization of ITGB1 as DAB2-dependent cargo but not TFR seems to require association with DAB2. The sequence is that of Epidermal growth factor receptor substrate 15-like 1 (Eps15l1) from Mus musculus (Mouse).